We begin with the raw amino-acid sequence, 244 residues long: MRQIKLIIEYDGTNYSGWQVQPNGITIQQLIEASLATMLGEPVKLHSSGRTDAGVHALGMVAAFKTGKLLPLRAFSDGLNALLPNDIAIRDAVEAPLSFNPRADAKSKHYRYTIYNAVRRSPLARLSSWHLRGALDIERMQAAASHFVGEHDFAAFRASNCAAKTTVRRLFSVSVAKDGESVIIDVHGSGFLKNMVRIIAGTLAEVGQGKKNPDAVPGLLVSGDRAASGITAPPQGLCLVEVFY.

D52 acts as the Nucleophile in catalysis. Y110 lines the substrate pocket.

Belongs to the tRNA pseudouridine synthase TruA family. Homodimer.

It carries out the reaction uridine(38/39/40) in tRNA = pseudouridine(38/39/40) in tRNA. Formation of pseudouridine at positions 38, 39 and 40 in the anticodon stem and loop of transfer RNAs. This chain is tRNA pseudouridine synthase A, found in Geotalea uraniireducens (strain Rf4) (Geobacter uraniireducens).